A 356-amino-acid chain; its full sequence is Phosphate acyltransferase (356 aa).

Belongs to the PlsX family. In terms of assembly, homodimer. Probably interacts with PlsY.

It localises to the cytoplasm. The catalysed reaction is a fatty acyl-[ACP] + phosphate = an acyl phosphate + holo-[ACP]. It participates in lipid metabolism; phospholipid metabolism. In terms of biological role, catalyzes the reversible formation of acyl-phosphate (acyl-PO(4)) from acyl-[acyl-carrier-protein] (acyl-ACP). This enzyme utilizes acyl-ACP as fatty acyl donor, but not acyl-CoA. This is Phosphate acyltransferase from Shigella flexneri serotype 5b (strain 8401).